The chain runs to 537 residues: Protein disulfide isomerase-like 1-5 (537 aa).

The first 29 residues, 1 to 29 (MSLIPKPISKVSTFTFILLILLSFTIIIA), serve as a signal peptide directing secretion. Residues 58–184 (LQEDRPEQQS…IVIWVQKKTG (127 aa)) form the Thioredoxin 1 domain. The Nucleophile role is filled by Cys-106. N-linked (GlcNAc...) asparagine glycans are attached at residues Asn-160, Asn-364, and Asn-416. In terms of domain architecture, Thioredoxin 2 spans 380-526 (LLESDPSPNS…IAVFINEELL (147 aa)). Residues Cys-447 and Cys-450 each act as nucleophile in the active site. Cysteines 447 and 450 form a disulfide. N-linked (GlcNAc...) asparagine glycosylation is present at Asn-530. The short motif at 534-537 (KDEL) is the Prevents secretion from ER element.

Belongs to the protein disulfide isomerase family. As to expression, widely expressed.

The protein resides in the endoplasmic reticulum lumen. The catalysed reaction is Catalyzes the rearrangement of -S-S- bonds in proteins.. Functionally, acts as a protein-folding catalyst that interacts with nascent polypeptides to catalyze the formation, isomerization, and reduction or oxidation of disulfide bonds. This Arabidopsis thaliana (Mouse-ear cress) protein is Protein disulfide isomerase-like 1-5 (PDIL1-5).